Here is a 259-residue protein sequence, read N- to C-terminus: Type III pantothenate kinase (259 aa).

6-13 (DIGNTNIT) provides a ligand contact to ATP. Substrate is bound at residue 113-116 (GADR). Asp-115 functions as the Proton acceptor in the catalytic mechanism. Asp-135 provides a ligand contact to K(+). Residue Thr-138 coordinates ATP. Substrate is bound at residue Thr-190.

This sequence belongs to the type III pantothenate kinase family. In terms of assembly, homodimer. It depends on NH4(+) as a cofactor. K(+) is required as a cofactor.

The protein resides in the cytoplasm. The catalysed reaction is (R)-pantothenate + ATP = (R)-4'-phosphopantothenate + ADP + H(+). It functions in the pathway cofactor biosynthesis; coenzyme A biosynthesis; CoA from (R)-pantothenate: step 1/5. Functionally, catalyzes the phosphorylation of pantothenate (Pan), the first step in CoA biosynthesis. This chain is Type III pantothenate kinase, found in Endomicrobium trichonymphae.